We begin with the raw amino-acid sequence, 149 residues long: MNKGQRHIKIREIIANKEIETQDELVDILRNVGFNVTQATVSRDIKELHLVKVPLHDGRYKYSLPADQRFNPLQKLKRNLVDSFVKLDTAGHMLVLKTLPGNAHSLGALIDHLEWDEIVGTICGDDTCLIICRTPEDTGVVSDRFLNML.

The protein belongs to the ArgR family.

It localises to the cytoplasm. The protein operates within amino-acid biosynthesis; L-arginine biosynthesis [regulation]. Functionally, regulates arginine biosynthesis genes. The chain is Arginine repressor from Bacillus mycoides (strain KBAB4) (Bacillus weihenstephanensis).